Reading from the N-terminus, the 285-residue chain is Dermonecrotic toxin LiSicTox-alphaIA2aii (285 aa).

Residues 1-5 (DVEER) constitute a propeptide that is removed on maturation. Residue histidine 17 is part of the active site. Mg(2+) contacts are provided by glutamate 37 and aspartate 39. The active-site Nucleophile is histidine 53. 2 disulfides stabilise this stretch: cysteine 57–cysteine 63 and cysteine 59–cysteine 202. Aspartate 97 serves as a coordination point for Mg(2+). Residue asparagine 262 is glycosylated (N-linked (GlcNAc...) asparagine).

This sequence belongs to the arthropod phospholipase D family. Class II subfamily. Class IIa sub-subfamily. Mg(2+) serves as cofactor. In terms of tissue distribution, expressed by the venom gland.

The protein resides in the secreted. It carries out the reaction an N-(acyl)-sphingosylphosphocholine = an N-(acyl)-sphingosyl-1,3-cyclic phosphate + choline. It catalyses the reaction an N-(acyl)-sphingosylphosphoethanolamine = an N-(acyl)-sphingosyl-1,3-cyclic phosphate + ethanolamine. The catalysed reaction is a 1-acyl-sn-glycero-3-phosphocholine = a 1-acyl-sn-glycero-2,3-cyclic phosphate + choline. The enzyme catalyses a 1-acyl-sn-glycero-3-phosphoethanolamine = a 1-acyl-sn-glycero-2,3-cyclic phosphate + ethanolamine. In terms of biological role, dermonecrotic toxins cleave the phosphodiester linkage between the phosphate and headgroup of certain phospholipids (sphingolipid and lysolipid substrates), forming an alcohol (often choline) and a cyclic phosphate. This toxin acts on sphingomyelin (SM) with high activity. It may also act on ceramide phosphoethanolamine (CPE), lysophosphatidylcholine (LPC) and lysophosphatidylethanolamine (LPE), but not on lysophosphatidylserine (LPS), and lysophosphatidylglycerol (LPG). It acts by transphosphatidylation, releasing exclusively cyclic phosphate products as second products. Shows high hemolytic activity. Induces dermonecrosis, vascular permeability, edema, inflammatory response, and platelet aggregation. Also shows cytotoxicity against renal epithelial cells. In addition, also induces hemolysis in a complement-dependent manner and probably also in a complement-independent manner. The hemolysis provoked in a complement-independent manner may be composed of several steps. The toxin may bind to erythrocyte membranes, may hydrolyze membrane phospholipids (SM and LPC) thus generating metabolism products that may cause hemolysis, probably by provoking an increase of calcium inside cells. The calcium influx may be due to the opening of L-type calcium channels, since L-type calcium channel blockers inhibit calcium influx. In vivo, is lethal to mice when intraperitoneally injected. This Loxosceles intermedia (Brown spider) protein is Dermonecrotic toxin LiSicTox-alphaIA2aii.